A 330-amino-acid polypeptide reads, in one-letter code: 4-hydroxythreonine-4-phosphate dehydrogenase (330 aa).

Positions 135 and 136 each coordinate substrate. 3 residues coordinate a divalent metal cation: His-165, His-210, and His-266. Substrate contacts are provided by Lys-274, Asn-283, and Arg-292.

Belongs to the PdxA family. Homodimer. The cofactor is Zn(2+). Requires Mg(2+) as cofactor. It depends on Co(2+) as a cofactor.

The protein resides in the cytoplasm. The enzyme catalyses 4-(phosphooxy)-L-threonine + NAD(+) = 3-amino-2-oxopropyl phosphate + CO2 + NADH. It participates in cofactor biosynthesis; pyridoxine 5'-phosphate biosynthesis; pyridoxine 5'-phosphate from D-erythrose 4-phosphate: step 4/5. In terms of biological role, catalyzes the NAD(P)-dependent oxidation of 4-(phosphooxy)-L-threonine (HTP) into 2-amino-3-oxo-4-(phosphooxy)butyric acid which spontaneously decarboxylates to form 3-amino-2-oxopropyl phosphate (AHAP). This chain is 4-hydroxythreonine-4-phosphate dehydrogenase, found in Vibrio cholerae serotype O1 (strain ATCC 39315 / El Tor Inaba N16961).